A 989-amino-acid chain; its full sequence is ATP-dependent 6-phosphofructokinase subunit alpha (989 aa).

Positions 1–585 (MPEPSISDLS…SYENFLSVSK (585 aa)) are N-terminal catalytic PFK domain 1. ATP-binding positions include Gly220, 283–284 (RC), and 313–316 (GDGS). A Mg(2+)-binding site is contributed by Asp314. Residues 359–361 (SID), Arg396, 403–405 (MGR), Glu460, Arg487, and 493–496 (HVQR) contribute to the beta-D-fructose 6-phosphate site. The active-site Proton acceptor is the Asp361. Residues 586 to 599 (YDDGSYLVPESSRL) form an interdomain linker region. The C-terminal regulatory PFK domain 2 stretch occupies residues 600 to 989 (NIAIIHVGAP…LSGRLSIRTT (390 aa)). Residues Arg670, 727–731 (TVSNN), Arg765, 772–774 (QGG), Glu832, Arg858, 864–867 (HVQQ), and Arg963 each bind beta-D-fructose 2,6-bisphosphate.

The protein belongs to the phosphofructokinase type A (PFKA) family. ATP-dependent PFK group I subfamily. Eukaryotic two domain clade 'E' sub-subfamily. Heterododecamer of 4 alpha, 4 beta and 4 gamma chains. Mg(2+) serves as cofactor.

Its subcellular location is the cytoplasm. The enzyme catalyses beta-D-fructose 6-phosphate + ATP = beta-D-fructose 1,6-bisphosphate + ADP + H(+). Its pathway is carbohydrate degradation; glycolysis; D-glyceraldehyde 3-phosphate and glycerone phosphate from D-glucose: step 3/4. Its activity is regulated as follows. Allosterically activated by ADP, AMP, or fructose 2,6-bisphosphate, and allosterically inhibited by ATP or citrate. Functionally, catalyzes the phosphorylation of D-fructose 6-phosphate to fructose 1,6-bisphosphate by ATP, the first committing step of glycolysis. The sequence is that of ATP-dependent 6-phosphofructokinase subunit alpha (PFK1) from Komagataella pastoris (Yeast).